Reading from the N-terminus, the 337-residue chain is 1-aminocyclopropane-1-carboxylate deaminase (337 aa).

Lys50 carries the N6-(pyridoxal phosphate)lysine modification. Ser77 functions as the Nucleophile in the catalytic mechanism.

The protein belongs to the ACC deaminase/D-cysteine desulfhydrase family. Homotrimer. It depends on pyridoxal 5'-phosphate as a cofactor.

The enzyme catalyses 1-aminocyclopropane-1-carboxylate + H2O = 2-oxobutanoate + NH4(+). Its function is as follows. Catalyzes a cyclopropane ring-opening reaction, the irreversible conversion of 1-aminocyclopropane-1-carboxylate (ACC) to ammonia and alpha-ketobutyrate. Allows growth on ACC as a nitrogen source. The sequence is that of 1-aminocyclopropane-1-carboxylate deaminase from Methylobacterium nodulans (strain LMG 21967 / CNCM I-2342 / ORS 2060).